The following is a 354-amino-acid chain: Lysophosphatidic acid receptor 3 (354 aa).

Over 1 to 31 (MNECHYDKRMDFFYNRSNTDTADEWTGTKLV) the chain is Extracellular. Asn-15 carries N-linked (GlcNAc...) asparagine glycosylation. Residues 32–52 (IVLCVGTFFCLFIFFSNSLVI) form a helical membrane-spanning segment. Residues 53–67 (AAVITNRKFHFPFYY) lie on the Cytoplasmic side of the membrane. A helical membrane pass occupies residues 68-88 (LLANLAAADFFAGIAYVFLMF). Residues 89–101 (NTGPVSKTLTVNR) lie on the Extracellular side of the membrane. Residues 102-124 (WLLRQGLLDTSLTASLANLLVIA) traverse the membrane as a helical segment. Residues 125–146 (VERHMSIMRMRIHSNLTKKRVT) lie on the Cytoplasmic side of the membrane. The helical transmembrane segment at 147–167 (LLILLVWAIAIFMGAVPTLGW) threads the bilayer. Over 168–186 (NCLCNISACSSLAPIYSRS) the chain is Extracellular. Asn-172 carries an N-linked (GlcNAc...) asparagine glycan. Residues 187-207 (YLIFWTVSNLLAFFIMVVVYV) form a helical membrane-spanning segment. Residues 208 to 240 (RIYMYVKRKTNVLSPHTSGSISRRRAPMKLMKT) are Cytoplasmic-facing. The helical transmembrane segment at 241-261 (VMTVLGAFVVCWTPGLVVLLL) threads the bilayer. Residues 262–276 (DGLNCKQCNVQHVKR) lie on the Extracellular side of the membrane. Residues 277–295 (WFLLLALLNSVMNPIIYSY) form a helical membrane-spanning segment. At 296–354 (KDEDMYNTMRKMICCAPHDSNAERHPSRIPSTIHSRSDTGSQYLEDSISQGQVCNKSSS) the chain is on the cytoplasmic side. Cys-309 is lipidated: S-palmitoyl cysteine.

Belongs to the G-protein coupled receptor 1 family.

It localises to the cell membrane. Functionally, receptor for lysophosphatidic acid (LPA), a mediator of diverse cellular activities. Seems to be coupled to the G(i)/G(o) and G(q) families of heteromeric G proteins. The sequence is that of Lysophosphatidic acid receptor 3 (Lpar3) from Rattus norvegicus (Rat).